The sequence spans 75 residues: Mating pheromone Er-1/Er-3 (75 aa).

An N-terminal signal peptide occupies residues 1-19 (MNKLAILAIIAMVLFSANA). The propeptide occupies 20-35 (FRFQSRLRSNVEAKTG). 3 cysteine pairs are disulfide-bonded: Cys38/Cys54, Cys45/Cys71, and Cys50/Cys63.

As to quaternary structure, homodimer.

It localises to the secreted. Its subcellular location is the cell membrane. Mating ciliate pheromones (or gamones) are diffusible extracellular communication signals that distinguish different intraspecific classes of cells commonly referred to as 'mating types'. They prepare the latter for conjugation by changing their cell surface properties. The membrane-bound form promotes inter-cellular communication and adhesion for mating pair formation and may act as binding site for the secreted form. The sequence is that of Mating pheromone Er-1/Er-3 (MAT1) from Euplotes raikovi.